A 360-amino-acid polypeptide reads, in one-letter code: 3-isopropylmalate dehydrogenase (360 aa).

Residue 76 to 89 coordinates NAD(+); sequence GPKWDTIERDIRPE. The substrate site is built by R96, R106, R134, and D224. Residues D224, D248, and D252 each coordinate Mg(2+). An NAD(+)-binding site is contributed by 282–294; sequence GSAPDIAGKGIAN.

Belongs to the isocitrate and isopropylmalate dehydrogenases family. LeuB type 1 subfamily. In terms of assembly, homodimer. Requires Mg(2+) as cofactor. Mn(2+) is required as a cofactor.

It is found in the cytoplasm. It catalyses the reaction (2R,3S)-3-isopropylmalate + NAD(+) = 4-methyl-2-oxopentanoate + CO2 + NADH. Its pathway is amino-acid biosynthesis; L-leucine biosynthesis; L-leucine from 3-methyl-2-oxobutanoate: step 3/4. Catalyzes the oxidation of 3-carboxy-2-hydroxy-4-methylpentanoate (3-isopropylmalate) to 3-carboxy-4-methyl-2-oxopentanoate. The product decarboxylates to 4-methyl-2 oxopentanoate. This Pseudomonas savastanoi pv. phaseolicola (strain 1448A / Race 6) (Pseudomonas syringae pv. phaseolicola (strain 1448A / Race 6)) protein is 3-isopropylmalate dehydrogenase.